Consider the following 75-residue polypeptide: Kappa-scoloptoxin(03)-Ssm1e (75 aa).

A signal peptide spans 1-23; the sequence is MKSSMAILLVMALIIFTLDKNYS.

The protein belongs to the scoloptoxin-03 family. Post-translationally, contains 3 disulfide bonds. Expressed by the venom gland.

It is found in the secreted. In terms of biological role, inhibits voltage-gated potassium channels. The polypeptide is Kappa-scoloptoxin(03)-Ssm1e (Scolopendra mutilans (Chinese red-headed centipede)).